A 416-amino-acid chain; its full sequence is Putative L-glutamine:3-amino-2,3-dideoxy-scyllo-inosose aminotransferase (416 aa).

Lysine 199 is subject to N6-(pyridoxal phosphate)lysine.

It belongs to the DegT/DnrJ/EryC1 family. L-glutamine:2-deoxy-scyllo-inosose/scyllo-inosose aminotransferase subfamily. Pyridoxal 5'-phosphate is required as a cofactor.

It carries out the reaction 3-amino-2,3-dideoxy-scyllo-inosose + L-glutamine = 2-deoxystreptamine + 2-oxoglutaramate. It participates in metabolic intermediate biosynthesis; 2-deoxystreptamine biosynthesis; 2-deoxystreptamine from D-glucose 6-phosphate: step 4/4. It functions in the pathway antibiotic biosynthesis; tobramycin biosynthesis. Functionally, catalyzes the transamination of 3-amino-2,3-dideoxy-scyllo-inosose (amino-DOI) into 2-deoxystreptamine (DOS). This Streptoalloteichus tenebrarius (strain ATCC 17920 / DSM 40477 / JCM 4838 / CBS 697.72 / NBRC 16177 / NCIMB 11028 / NRRL B-12390 / A12253. 1 / ISP 5477) (Streptomyces tenebrarius) protein is Putative L-glutamine:3-amino-2,3-dideoxy-scyllo-inosose aminotransferase (tobS2).